Here is a 407-residue protein sequence, read N- to C-terminus: Imidazolonepropionase (407 aa).

Fe(3+) contacts are provided by histidine 68 and histidine 70. Histidine 68 and histidine 70 together coordinate Zn(2+). 4-imidazolone-5-propanoate contacts are provided by arginine 77, tyrosine 140, and histidine 173. Tyrosine 140 serves as a coordination point for N-formimidoyl-L-glutamate. Fe(3+) is bound at residue histidine 238. Histidine 238 contributes to the Zn(2+) binding site. Glutamine 241 serves as a coordination point for 4-imidazolone-5-propanoate. Position 313 (aspartate 313) interacts with Fe(3+). Aspartate 313 lines the Zn(2+) pocket. N-formimidoyl-L-glutamate contacts are provided by asparagine 315 and glycine 317. Residue threonine 318 participates in 4-imidazolone-5-propanoate binding.

This sequence belongs to the metallo-dependent hydrolases superfamily. HutI family. Zn(2+) is required as a cofactor. The cofactor is Fe(3+).

Its subcellular location is the cytoplasm. It carries out the reaction 4-imidazolone-5-propanoate + H2O = N-formimidoyl-L-glutamate. The protein operates within amino-acid degradation; L-histidine degradation into L-glutamate; N-formimidoyl-L-glutamate from L-histidine: step 3/3. In terms of biological role, catalyzes the hydrolytic cleavage of the carbon-nitrogen bond in imidazolone-5-propanoate to yield N-formimidoyl-L-glutamate. It is the third step in the universal histidine degradation pathway. This Burkholderia mallei (strain ATCC 23344) protein is Imidazolonepropionase.